The chain runs to 541 residues: Atlastin-3 (541 aa).

An N-terminal hypervariable region (HVR) region spans residues 1–25 (MLSPQRVAAAASRGADDAMESSKPG). Residues 1-445 (MLSPQRVAAA…NVFSTFRTPA (445 aa)) are Cytoplasmic-facing. Positions 57–305 (DLDVVVVSVA…LIPYVLNPSK (249 aa)) constitute a GB1/RHD3-type G domain. GDP-binding residues include arginine 70, lysine 71, glycine 72, lysine 73, serine 74, phenylalanine 75, and arginine 109. Aspartate 142 serves as a coordination point for Mg(2+). 4 residues coordinate GDP: arginine 213, aspartate 214, valine 272, and serine 275. The 3HB (three-helix bundle) domain stretch occupies residues 343–434 (MLQATAEANN…YENFCKHNGS (92 aa)). Lysine 391 carries the N6-acetyllysine modification. The helical transmembrane segment at 446–466 (VLFTGIVALYIASGLTGFIGL) threads the bilayer. Glutamate 467 is a topological domain (lumenal). A helical membrane pass occupies residues 468 to 488 (VVAQLFNCMVGLLLIALLTWG). The Cytoplasmic segment spans residues 489–541 (YIRYSGQYRELGGAIDFGAAYVLEQASSHIGNSTQATVRDAVVGRPSMDKKAQ). Serine 535 carries the post-translational modification Phosphoserine.

The protein belongs to the TRAFAC class dynamin-like GTPase superfamily. GB1/RHD3 GTPase family. GB1 subfamily. As to quaternary structure, monomeric and homodimeric. The homodimer, transiently formed by two molecules on opposing membranes, is the active form mediating ER membrane fusion. Interacts with ZFYVE27; both proteins are involved in endoplasmic reticulum tubular network organization. Interacts with REEP5; both proteins are involved in endoplasmic reticulum tubular network organization. In terms of tissue distribution, expressed in the central nervous system and in dorsal root ganglia neurons. Expressed in peripheral tissues (at protein level).

Its subcellular location is the endoplasmic reticulum membrane. The enzyme catalyses GTP + H2O = GDP + phosphate + H(+). Atlastin-3 (ATL3) is a membrane-anchored GTPase that mediates the GTP-dependent fusion of endoplasmic reticulum (ER) membranes, maintaining the continuous ER network. It facilitates the formation of three-way junctions where ER tubules intersect. Two atlastin-3 on neighboring ER tubules bind GTP and form loose homodimers through the GB1/RHD3-type G domains and 3HB regions. Upon GTP hydrolysis, the 3HB regions tighten, pulling the membranes together to drive their fusion. After fusion, the homodimer disassembles upon release of inorganic phosphate (Pi). Subsequently, GDP dissociates, resetting the monomers to a conformation ready for a new fusion cycle. In Homo sapiens (Human), this protein is Atlastin-3.